A 465-amino-acid polypeptide reads, in one-letter code: Alpha-2A adrenergic receptor (465 aa).

Over 1–48 the chain is Extracellular; the sequence is MFRQEQPLAEGSFAPMGSLQPEAGNASWNGTEAPGGGARATPYSLQVT. N-linked (GlcNAc...) asparagine glycans are attached at residues Asn-25 and Asn-29. Residues 49–74 traverse the membrane as a helical segment; sequence LTLVCLAGLLMLFTVFGNVLVIIAVF. Over 75–85 the chain is Cytoplasmic; sequence TSRALKAPQNL. The chain crosses the membrane as a helical span at residues 86-111; sequence FLVSLASADILVATLVIPFSLANEVM. The Extracellular portion of the chain corresponds to 112–121; it reads GYWYFGKAWC. Cys-121 and Cys-203 form a disulfide bridge. The chain crosses the membrane as a helical span at residues 122-144; the sequence is EIYLALDVLFCTSSIVHLCAISL. The Cytoplasmic portion of the chain corresponds to 145-164; the sequence is DRYWSITQAIEYNLKRTPRR. A helical membrane pass occupies residues 165–188; sequence IKAIIVTVWVISAVISFPPLISIE. Residues 189–207 are Extracellular-facing; sequence KKAGGGGQQPAEPRCEIND. The chain crosses the membrane as a helical span at residues 208 to 232; sequence QKWYVISSCIGSFFAPCLIMILVYV. Over 233–389 the chain is Cytoplasmic; it reads RIYQIAKRRT…RQNREKRFTF (157 aa). Residues 242–377 are disordered; that stretch reads TRVPPSRRGP…RGGVAKASRW (136 aa). The segment covering 313-330 has biased composition (basic and acidic residues); sequence SSEHAERPPGPRRSERGP. Ser-346 bears the Phosphoserine mark. Residue Arg-368 is modified to Omega-N-methylarginine. Residues 390–414 form a helical membrane-spanning segment; it reads VLAVVIGVFVVCWFPFFFTYTLTAV. The Extracellular segment spans residues 415–424; it reads GCSVPPTLFK. Residues 425-445 traverse the membrane as a helical segment; that stretch reads FFFWFGYCNSSLNPVIYTIFN. The Cytoplasmic segment spans residues 446-465; sequence HDFRRAFKKILCRGDRKRIV. A lipid anchor (S-palmitoyl cysteine) is attached at Cys-457.

This sequence belongs to the G-protein coupled receptor 1 family. Adrenergic receptor subfamily. ADRA2A sub-subfamily.

The protein resides in the cell membrane. Alpha-2 adrenergic receptors mediate the catecholamine-induced inhibition of adenylate cyclase through the action of G proteins. This is Alpha-2A adrenergic receptor from Sus scrofa (Pig).